Here is a 1138-residue protein sequence, read N- to C-terminus: uncharacterized protein (1138 aa).

2 disordered regions span residues 985-1015 (EKKL…MAQE) and 1094-1138 (LVAT…QNKL). Acidic residues predominate over residues 1110 to 1138 (DDDEYEKYDSGIEDIETDVDEEEEVQNKL).

This is an uncharacterized protein from Ostreid herpesvirus 1 (isolate France) (OsHV-1).